The sequence spans 211 residues: uncharacterized protein (211 aa).

Zn(2+) is bound by residues His54, His56, Asp58, His59, His129, Asp148, and His189.

Belongs to the metallo-beta-lactamase superfamily. Glyoxalase II family. Requires Zn(2+) as cofactor.

This is an uncharacterized protein from Aquifex aeolicus (strain VF5).